Here is a 164-residue protein sequence, read N- to C-terminus: Proline-rich protein 2 (164 aa).

Residues 1–21 (MNLKVGIAVLIIALIVPSAQP) form the signal peptide.

In terms of tissue distribution, component of the acid-soluble organic matrix of calcified layers of the shell (at protein level).

It localises to the secreted. In Lottia gigantea (Giant owl limpet), this protein is Proline-rich protein 2.